The primary structure comprises 85 residues: Large ribosomal subunit protein bL27 (85 aa).

The tract at residues 1 to 20 (MAHKKAGGSTRNGRDSEAKR) is disordered.

This sequence belongs to the bacterial ribosomal protein bL27 family.

The protein is Large ribosomal subunit protein bL27 of Enterobacter sp. (strain 638).